The primary structure comprises 436 residues: Serine hydroxymethyltransferase (436 aa).

(6S)-5,6,7,8-tetrahydrofolate-binding positions include Leu133 and 137-139 (GHI). Lys242 carries the post-translational modification N6-(pyridoxal phosphate)lysine.

The protein belongs to the SHMT family. In terms of assembly, homodimer. Pyridoxal 5'-phosphate is required as a cofactor.

Its subcellular location is the cytoplasm. It catalyses the reaction (6R)-5,10-methylene-5,6,7,8-tetrahydrofolate + glycine + H2O = (6S)-5,6,7,8-tetrahydrofolate + L-serine. It functions in the pathway one-carbon metabolism; tetrahydrofolate interconversion. The protein operates within amino-acid biosynthesis; glycine biosynthesis; glycine from L-serine: step 1/1. In terms of biological role, catalyzes the reversible interconversion of serine and glycine with tetrahydrofolate (THF) serving as the one-carbon carrier. This reaction serves as the major source of one-carbon groups required for the biosynthesis of purines, thymidylate, methionine, and other important biomolecules. Also exhibits THF-independent aldolase activity toward beta-hydroxyamino acids, producing glycine and aldehydes, via a retro-aldol mechanism. In Pelagibacter ubique (strain HTCC1062), this protein is Serine hydroxymethyltransferase.